The following is an 801-amino-acid chain: Elongation factor G, mitochondrial (801 aa).

A mitochondrion-targeting transit peptide spans 1 to 24; sequence MRCPSLARLPHRAISGLTRLPVRL. One can recognise a tr-type G domain in the interval 99–386; it reads SRIRNIGIAA…GVIDYLPNPS (288 aa). GTP is bound by residues 108–115, 184–188, and 238–241; these read AHIDSGKT, DTPGH, and NKMD.

It belongs to the TRAFAC class translation factor GTPase superfamily. Classic translation factor GTPase family. EF-G/EF-2 subfamily.

The protein localises to the mitochondrion. The protein operates within protein biosynthesis; polypeptide chain elongation. Mitochondrial GTPase that catalyzes the GTP-dependent ribosomal translocation step during translation elongation. During this step, the ribosome changes from the pre-translocational (PRE) to the post-translocational (POST) state as the newly formed A-site-bound peptidyl-tRNA and P-site-bound deacylated tRNA move to the P and E sites, respectively. Catalyzes the coordinated movement of the two tRNA molecules, the mRNA and conformational changes in the ribosome. The polypeptide is Elongation factor G, mitochondrial (mef1) (Aspergillus clavatus (strain ATCC 1007 / CBS 513.65 / DSM 816 / NCTC 3887 / NRRL 1 / QM 1276 / 107)).